Consider the following 493-residue polypeptide: 3-octaprenyl-4-hydroxybenzoate carboxy-lyase (493 aa).

Asn175 provides a ligand contact to Mn(2+). Prenylated FMN is bound by residues 178–180 (IYR), 192–194 (RWL), and 197–198 (RG). Residue Glu241 coordinates Mn(2+). Asp290 (proton donor) is an active-site residue.

Belongs to the UbiD family. Homohexamer. Prenylated FMN serves as cofactor. It depends on Mn(2+) as a cofactor.

It is found in the cell membrane. It carries out the reaction a 4-hydroxy-3-(all-trans-polyprenyl)benzoate + H(+) = a 2-(all-trans-polyprenyl)phenol + CO2. Its pathway is cofactor biosynthesis; ubiquinone biosynthesis. Functionally, catalyzes the decarboxylation of 3-octaprenyl-4-hydroxy benzoate to 2-octaprenylphenol, an intermediate step in ubiquinone biosynthesis. The protein is 3-octaprenyl-4-hydroxybenzoate carboxy-lyase of Photorhabdus laumondii subsp. laumondii (strain DSM 15139 / CIP 105565 / TT01) (Photorhabdus luminescens subsp. laumondii).